Reading from the N-terminus, the 136-residue chain is Heavy metal-associated isoprenylated plant protein 19 (136 aa).

In terms of domain architecture, HMA spans 13–77; it reads YMDVEFNVSM…LKKKTGKRVK (65 aa). Residues Cys24 and Cys27 each contribute to the a metal cation site. Position 133 is a cysteine methyl ester (Cys133). The S-farnesyl cysteine moiety is linked to residue Cys133. A propeptide spans 134 to 136 (removed in mature form); that stretch reads SIS.

The protein belongs to the HIPP family.

In terms of biological role, heavy-metal-binding protein. The protein is Heavy metal-associated isoprenylated plant protein 19 of Arabidopsis thaliana (Mouse-ear cress).